A 372-amino-acid chain; its full sequence is Queuine tRNA-ribosyltransferase (372 aa).

D89 (proton acceptor) is an active-site residue. Substrate contacts are provided by residues 89–93, D161, and G232; that span reads DSGGF. The interval 262–268 is RNA binding; it reads GIGDLPS. D281 acts as the Nucleophile in catalysis. Residues 286–290 are RNA binding; important for wobble base 34 recognition; it reads TKAAR. Zn(2+) is bound by residues C319, C321, C324, and H351.

It belongs to the queuine tRNA-ribosyltransferase family. In terms of assembly, homodimer. Within each dimer, one monomer is responsible for RNA recognition and catalysis, while the other monomer binds to the replacement base PreQ1. Requires Zn(2+) as cofactor.

It carries out the reaction 7-aminomethyl-7-carbaguanine + guanosine(34) in tRNA = 7-aminomethyl-7-carbaguanosine(34) in tRNA + guanine. Its pathway is tRNA modification; tRNA-queuosine biosynthesis. Its function is as follows. Catalyzes the base-exchange of a guanine (G) residue with the queuine precursor 7-aminomethyl-7-deazaguanine (PreQ1) at position 34 (anticodon wobble position) in tRNAs with GU(N) anticodons (tRNA-Asp, -Asn, -His and -Tyr). Catalysis occurs through a double-displacement mechanism. The nucleophile active site attacks the C1' of nucleotide 34 to detach the guanine base from the RNA, forming a covalent enzyme-RNA intermediate. The proton acceptor active site deprotonates the incoming PreQ1, allowing a nucleophilic attack on the C1' of the ribose to form the product. After dissociation, two additional enzymatic reactions on the tRNA convert PreQ1 to queuine (Q), resulting in the hypermodified nucleoside queuosine (7-(((4,5-cis-dihydroxy-2-cyclopenten-1-yl)amino)methyl)-7-deazaguanosine). The polypeptide is Queuine tRNA-ribosyltransferase (Chlamydia abortus (strain DSM 27085 / S26/3) (Chlamydophila abortus)).